The sequence spans 169 residues: Ubiquitin-fold modifier-conjugating enzyme 1 (169 aa).

Catalysis depends on Cys116, which acts as the Glycyl thioester intermediate.

This sequence belongs to the ubiquitin-conjugating enzyme family. UFC1 subfamily.

Its function is as follows. E2-like enzyme which forms an intermediate with UFM1 via a thioester linkage. The sequence is that of Ubiquitin-fold modifier-conjugating enzyme 1 from Branchiostoma floridae (Florida lancelet).